A 502-amino-acid chain; its full sequence is Glycerol kinase (502 aa).

ADP is bound at residue Thr14. ATP contacts are provided by Thr14, Thr15, and Ser16. Thr14 serves as a coordination point for sn-glycerol 3-phosphate. Position 18 (Arg18) interacts with ADP. Residues Arg84, Glu85, Tyr136, and Asp246 each contribute to the sn-glycerol 3-phosphate site. Glycerol contacts are provided by Arg84, Glu85, Tyr136, Asp246, and Gln247. Thr268 and Gly311 together coordinate ADP. Positions 268, 311, 315, and 412 each coordinate ATP. ADP contacts are provided by Gly412 and Asn416.

Belongs to the FGGY kinase family. Homotetramer and homodimer (in equilibrium). Heterodimer with EIIA-Glc. Binds 1 zinc ion per glycerol kinase EIIA-Glc dimer. The zinc ion is important for dimerization.

The enzyme catalyses glycerol + ATP = sn-glycerol 3-phosphate + ADP + H(+). Its pathway is polyol metabolism; glycerol degradation via glycerol kinase pathway; sn-glycerol 3-phosphate from glycerol: step 1/1. With respect to regulation, activity of this regulatory enzyme is affected by several metabolites. Allosterically and non-competitively inhibited by fructose 1,6-bisphosphate (FBP) and unphosphorylated phosphocarrier protein EIIA-Glc (III-Glc), an integral component of the bacterial phosphotransferase (PTS) system. Functionally, key enzyme in the regulation of glycerol uptake and metabolism. Catalyzes the phosphorylation of glycerol to yield sn-glycerol 3-phosphate. This Escherichia coli O7:K1 (strain IAI39 / ExPEC) protein is Glycerol kinase.